The sequence spans 388 residues: Phosphopentomutase (388 aa).

Aspartate 9, aspartate 283, histidine 288, aspartate 324, histidine 325, and histidine 336 together coordinate Mn(2+).

Belongs to the phosphopentomutase family. Mn(2+) is required as a cofactor.

It localises to the cytoplasm. It carries out the reaction 2-deoxy-alpha-D-ribose 1-phosphate = 2-deoxy-D-ribose 5-phosphate. The enzyme catalyses alpha-D-ribose 1-phosphate = D-ribose 5-phosphate. The protein operates within carbohydrate degradation; 2-deoxy-D-ribose 1-phosphate degradation; D-glyceraldehyde 3-phosphate and acetaldehyde from 2-deoxy-alpha-D-ribose 1-phosphate: step 1/2. Isomerase that catalyzes the conversion of deoxy-ribose 1-phosphate (dRib-1-P) and ribose 1-phosphate (Rib-1-P) to deoxy-ribose 5-phosphate (dRib-5-P) and ribose 5-phosphate (Rib-5-P), respectively. The protein is Phosphopentomutase of Deinococcus radiodurans (strain ATCC 13939 / DSM 20539 / JCM 16871 / CCUG 27074 / LMG 4051 / NBRC 15346 / NCIMB 9279 / VKM B-1422 / R1).